The primary structure comprises 216 residues: Ribonuclease HII (216 aa).

The region spanning 28–216 (DIVCGVDEAG…PVRAALDLIR (189 aa)) is the RNase H type-2 domain. A divalent metal cation contacts are provided by D34, E35, and D126.

The protein belongs to the RNase HII family. Mn(2+) is required as a cofactor. It depends on Mg(2+) as a cofactor.

Its subcellular location is the cytoplasm. The catalysed reaction is Endonucleolytic cleavage to 5'-phosphomonoester.. Functionally, endonuclease that specifically degrades the RNA of RNA-DNA hybrids. This chain is Ribonuclease HII, found in Burkholderia vietnamiensis (strain G4 / LMG 22486) (Burkholderia cepacia (strain R1808)).